We begin with the raw amino-acid sequence, 98 residues long: Large ribosomal subunit protein eL30 (98 aa).

This sequence belongs to the eukaryotic ribosomal protein eL30 family.

The chain is Large ribosomal subunit protein eL30 (rpl30e) from Methanothermobacter thermautotrophicus (strain ATCC 29096 / DSM 1053 / JCM 10044 / NBRC 100330 / Delta H) (Methanobacterium thermoautotrophicum).